The chain runs to 502 residues: CBL-interacting protein kinase 11 (502 aa).

Positions 12–267 (YEVGKQLGQG…IPRIKRSTWY (256 aa)) constitute a Protein kinase domain. Residues 18 to 26 (LGQGTFAKV) and Lys-41 contribute to the ATP site. The Proton acceptor role is filled by Asp-135. The tract at residues 153 to 182 (DFGLSALAESKRQDGLLHTTCGTPAYVAPE) is activation loop. The NAF domain occupies 297 to 333 (AECSTSEENQGSLSLPNLNAFDIISLSTGFNLSGFFE). The tract at residues 339–367 (QEERFTTRQPVTTVLGKLKELAKRLKLKV) is PPI. Positions 447 to 502 (LQGEQQQSPLPPELPQDQLQPSLPQQEKQDMPEPPLLPQVPQEEVQTSIPAEQTKN) are disordered. A compositionally biased stretch (low complexity) spans 461–472 (PQDQLQPSLPQQ). Residues 493 to 502 (TSIPAEQTKN) show a composition bias toward polar residues.

This sequence belongs to the protein kinase superfamily. CAMK Ser/Thr protein kinase family. SNF1 subfamily. The cofactor is Mn(2+).

The enzyme catalyses L-seryl-[protein] + ATP = O-phospho-L-seryl-[protein] + ADP + H(+). It catalyses the reaction L-threonyl-[protein] + ATP = O-phospho-L-threonyl-[protein] + ADP + H(+). In terms of biological role, CIPK serine-threonine protein kinases interact with CBL proteins. Binding of a CBL protein to the regulatory NAF domain of CIPK protein lead to the activation of the kinase in a calcium-dependent manner. This is CBL-interacting protein kinase 11 (CIPK11) from Oryza sativa subsp. japonica (Rice).